The sequence spans 389 residues: 3-ketoacyl-CoA thiolase (389 aa).

Residue Cys-91 is the Acyl-thioester intermediate of the active site. Residues His-343 and Cys-373 each act as proton acceptor in the active site.

It belongs to the thiolase-like superfamily. Thiolase family. Heterotetramer of two alpha chains (FadB) and two beta chains (FadA).

It is found in the cytoplasm. It carries out the reaction an acyl-CoA + acetyl-CoA = a 3-oxoacyl-CoA + CoA. It participates in lipid metabolism; fatty acid beta-oxidation. Its function is as follows. Catalyzes the final step of fatty acid oxidation in which acetyl-CoA is released and the CoA ester of a fatty acid two carbons shorter is formed. The sequence is that of 3-ketoacyl-CoA thiolase from Citrobacter koseri (strain ATCC BAA-895 / CDC 4225-83 / SGSC4696).